The sequence spans 229 residues: Ribonuclease 3 (229 aa).

One can recognise an RNase III domain in the interval 5-134 (EQKLEQDFGI…FLGALYLDQG (130 aa)). Glutamate 47 serves as a coordination point for Mg(2+). Residue aspartate 51 is part of the active site. The Mg(2+) site is built by aspartate 120 and glutamate 123. Glutamate 123 is a catalytic residue. A DRBM domain is found at 160 to 229 (DYKTALQERL…AKSALEQLGN (70 aa)).

This sequence belongs to the ribonuclease III family. Homodimer. Requires Mg(2+) as cofactor.

It is found in the cytoplasm. The catalysed reaction is Endonucleolytic cleavage to 5'-phosphomonoester.. Functionally, digests double-stranded RNA. Involved in the processing of primary rRNA transcript to yield the immediate precursors to the large and small rRNAs (23S and 16S). Also processes some mRNAs, and tRNAs when they are encoded in the rRNA operon. CRISPR (clustered regularly interspaced short palindromic repeat) is an adaptive immune system that provides protection against mobile genetic elements (viruses, transposable elements and conjugative plasmids). CRISPR clusters contain spacers, sequences complementary to antecedent mobile elements, and target invading nucleic acids. CRISPR clusters are transcribed and processed into CRISPR RNA (crRNA). In this organism endogenous ribonuclease 3 and Cas9 are required for correct coprocessing of pre-crRNA and the trans-encoded small RNA (tracrRNA). Cas9, crRNA and tracrRNA are required for cleavage of invading DNA. Complements pre-crRNA and tracRNA coprocessing defects in an rnc deletion in S.pyogenes strain 370. The polypeptide is Ribonuclease 3 (Streptococcus thermophilus (strain ATCC BAA-491 / LMD-9)).